We begin with the raw amino-acid sequence, 1130 residues long: Putative protein tag-278 (1130 aa).

Disordered stretches follow at residues 1–92, 104–129, and 974–1130; these read MSRS…DIDN, VARE…ELKR, and NELI…AWKF. 2 coiled-coil regions span residues 121-779 and 805-1061; these read AGRE…EEIK and EERE…ARAK. Positions 983-993 are enriched in basic and acidic residues; sequence RQTDESTSEPH. Residues 999 to 1011 show a composition bias toward polar residues; the sequence is SITSHGVFQNFVS. 2 stretches are compositionally biased toward basic and acidic residues: residues 1013 to 1057 and 1068 to 1081; these read MKDK…EKSP and RLRD…KSDN. The span at 1082–1095 shows a compositional bias: low complexity; the sequence is LESTPSSSSRNLLS. A compositionally biased stretch (basic and acidic residues) spans 1116-1130; the sequence is TKKDSSSEKRPAWKF.

The chain is Putative protein tag-278 (tag-278) from Caenorhabditis elegans.